The sequence spans 313 residues: Dimethyladenosine transferase (313 aa).

The tract at residues Met-1 to Leu-22 is disordered. S-adenosyl-L-methionine contacts are provided by His-37, Leu-39, Gly-64, Glu-85, Asp-113, and Asn-128.

The protein belongs to the class I-like SAM-binding methyltransferase superfamily. rRNA adenine N(6)-methyltransferase family. Part of the small subunit (SSU) processome, composed of more than 70 proteins and the RNA chaperone small nucleolar RNA (snoRNA) U3.

It localises to the nucleus. The protein resides in the nucleoplasm. It is found in the nucleolus. The catalysed reaction is adenosine(1779)/adenosine(1780) in 18S rRNA + 4 S-adenosyl-L-methionine = N(6)-dimethyladenosine(1779)/N(6)-dimethyladenosine(1780) in 18S rRNA + 4 S-adenosyl-L-homocysteine + 4 H(+). Its function is as follows. Specifically dimethylates two adjacent adenosines in the loop of a conserved hairpin near the 3'-end of 18S rRNA in the 40S particle. Involved in the pre-rRNA processing steps leading to small-subunit rRNA production independently of its RNA-modifying catalytic activity. Part of the small subunit (SSU) processome, first precursor of the small eukaryotic ribosomal subunit. During the assembly of the SSU processome in the nucleolus, many ribosome biogenesis factors, an RNA chaperone and ribosomal proteins associate with the nascent pre-rRNA and work in concert to generate RNA folding, modifications, rearrangements and cleavage as well as targeted degradation of pre-ribosomal RNA by the RNA exosome. This is Dimethyladenosine transferase (DIMT1) from Bos taurus (Bovine).